Consider the following 62-residue polypeptide: Large ribosomal subunit protein bL33 (62 aa).

Belongs to the bacterial ribosomal protein bL33 family.

This is Large ribosomal subunit protein bL33 from Acaryochloris marina (strain MBIC 11017).